Reading from the N-terminus, the 210-residue chain is Leucyl/phenylalanyl-tRNA--protein transferase (210 aa).

Belongs to the L/F-transferase family.

It is found in the cytoplasm. The catalysed reaction is N-terminal L-lysyl-[protein] + L-leucyl-tRNA(Leu) = N-terminal L-leucyl-L-lysyl-[protein] + tRNA(Leu) + H(+). It carries out the reaction N-terminal L-arginyl-[protein] + L-leucyl-tRNA(Leu) = N-terminal L-leucyl-L-arginyl-[protein] + tRNA(Leu) + H(+). It catalyses the reaction L-phenylalanyl-tRNA(Phe) + an N-terminal L-alpha-aminoacyl-[protein] = an N-terminal L-phenylalanyl-L-alpha-aminoacyl-[protein] + tRNA(Phe). In terms of biological role, functions in the N-end rule pathway of protein degradation where it conjugates Leu, Phe and, less efficiently, Met from aminoacyl-tRNAs to the N-termini of proteins containing an N-terminal arginine or lysine. In Ruegeria sp. (strain TM1040) (Silicibacter sp.), this protein is Leucyl/phenylalanyl-tRNA--protein transferase.